The primary structure comprises 226 residues: MSRIYHDGALRNKAVQSVRLPGAWDPAAHQGGNGVLLEGELIDVSRHSILDTHGRKERYYVLYIRPSHIHRRKFDAKGNEIEPNFSATRKVNTGFLMSSYKVEAKGDTDRLTPEALKGLVNKPELLALTESLTPDHTVAFWMPESEMEVMELELGAGVRLKTRGDGPFLDSLAKLEAGTVTKCNFTGDGKTGASWTDNIMAQKCSKGAAAEIREQGDGAEDEEWDD.

The tract at residues 211-226 is necessary and sufficient for interaction with ARPC2; it reads EIREQGDGAEDEEWDD.

It belongs to the Arpin family. In terms of assembly, associates with the Arp2/3 complex. Interacts with ARPC2; enhanced by activated RAC1. Interacts with ARPC5; the interaction is dependent on RAC1.

Its subcellular location is the cell projection. The protein localises to the lamellipodium. In terms of biological role, regulates actin polymerization by inhibiting the actin-nucleating activity of the Arp2/3 complex; the function is competitive with nucleation promoting factors. Participates in an incoherent feedforward loop at the lamellipodium tip where it inhibits the ARP2/2 complex in response to Rac signaling and where Rac also stimulates actin polymerization through the WAVE complex. Involved in steering cell migration by controlling its directional persistence. The sequence is that of Arpin (ARPIN) from Homo sapiens (Human).